Here is a 556-residue protein sequence, read N- to C-terminus: Formate--tetrahydrofolate ligase 1 (556 aa).

An ATP-binding site is contributed by 65–72 (TPAGEGKS).

Belongs to the formate--tetrahydrofolate ligase family.

It catalyses the reaction (6S)-5,6,7,8-tetrahydrofolate + formate + ATP = (6R)-10-formyltetrahydrofolate + ADP + phosphate. It functions in the pathway one-carbon metabolism; tetrahydrofolate interconversion. The sequence is that of Formate--tetrahydrofolate ligase 1 from Streptococcus pyogenes serotype M2 (strain MGAS10270).